Reading from the N-terminus, the 298-residue chain is Iron/alpha-ketoglutarate-dependent dioxygenase ausO (298 aa).

Residues H130, D132, and H211 each coordinate Fe cation.

Belongs to the PhyH family. As to quaternary structure, homodimer. It depends on Fe cation as a cofactor.

It participates in secondary metabolite biosynthesis; terpenoid biosynthesis. Iron/alpha-ketoglutarate-dependent dioxygenase; part of the gene cluster that mediates the biosynthesis of calidodehydroaustin, a fungal meroterpenoid. The first step of the pathway is the synthesis of 3,5-dimethylorsellinic acid by the polyketide synthase ausA. 3,5-dimethylorsellinic acid is then prenylated by the polyprenyl transferase ausN. Further epoxidation by the FAD-dependent monooxygenase ausM and cyclization by the probable terpene cyclase ausL lead to the formation of protoaustinoid A. Protoaustinoid A is then oxidized to spiro-lactone preaustinoid A3 by the combined action of the FAD-binding monooxygenases ausB and ausC, and the dioxygenase ausE. Acid-catalyzed keto-rearrangement and ring contraction of the tetraketide portion of preaustinoid A3 by ausJ lead to the formation of preaustinoid A4. The aldo-keto reductase ausK, with the help of ausH, is involved in the next step by transforming preaustinoid A4 into isoaustinone which is in turn hydroxylated by the P450 monooxygenase ausI to form austinolide. The cytochrome P450 monooxygenase ausG modifies austinolide to austinol. Austinol is further acetylated to austin by the O-acetyltransferase ausP, which spontaneously changes to dehydroaustin. The cytochrome P450 monooxygenase ausR then converts dehydroaustin is into 7-dehydrodehydroaustin. The hydroxylation catalyzed by ausR permits the O-acetyltransferase ausQ to add an additional acetyl group to the molecule, leading to the formation of acetoxydehydroaustin. The short chain dehydrogenase ausT catalyzes the reduction of the double bond present between carbon atoms 1 and 2 to convert 7-dehydrodehydroaustin into 1,2-dihydro-7-hydroxydehydroaustin. AusQ catalyzes not only an acetylation reaction but also the addition of the PKS ausV diketide product to 1,2-dihydro-7-hydroxydehydroaustin, forming precalidodehydroaustin. Finally, the iron/alpha-ketoglutarate-dependent dioxygenase converts precalidodehydroaustin into calidodehydroaustin. The sequence is that of Iron/alpha-ketoglutarate-dependent dioxygenase ausO from Aspergillus calidoustus.